The sequence spans 334 residues: ATP-dependent kinase YFH7 (334 aa).

Residue 30-38 coordinates ATP; it reads GHPGSGKST.

This sequence belongs to the YFH7 family.

Its function is as follows. ATP-dependent kinase that could be involved in endoplasmic reticulum membrane assembly. In Eremothecium gossypii (strain ATCC 10895 / CBS 109.51 / FGSC 9923 / NRRL Y-1056) (Yeast), this protein is ATP-dependent kinase YFH7 (YFH7).